Consider the following 502-residue polypeptide: ATP synthase subunit alpha (502 aa).

The disordered stretch occupies residues 115–135; that stretch reads VDGLGPINTTNTRPIESPAPG. Position 169–176 (169–176) interacts with ATP; that stretch reads GDRQTGKT.

It belongs to the ATPase alpha/beta chains family. In terms of assembly, F-type ATPases have 2 components, CF(1) - the catalytic core - and CF(0) - the membrane proton channel. CF(1) has five subunits: alpha(3), beta(3), gamma(1), delta(1), epsilon(1). CF(0) has three main subunits: a(1), b(2) and c(9-12). The alpha and beta chains form an alternating ring which encloses part of the gamma chain. CF(1) is attached to CF(0) by a central stalk formed by the gamma and epsilon chains, while a peripheral stalk is formed by the delta and b chains.

The protein resides in the cell membrane. The enzyme catalyses ATP + H2O + 4 H(+)(in) = ADP + phosphate + 5 H(+)(out). Its function is as follows. Produces ATP from ADP in the presence of a proton gradient across the membrane. The alpha chain is a regulatory subunit. The chain is ATP synthase subunit alpha from Bacillus cereus (strain B4264).